Reading from the N-terminus, the 438-residue chain is Histidine--tRNA ligase (438 aa).

The protein belongs to the class-II aminoacyl-tRNA synthetase family. In terms of assembly, homodimer.

The protein resides in the cytoplasm. It catalyses the reaction tRNA(His) + L-histidine + ATP = L-histidyl-tRNA(His) + AMP + diphosphate + H(+). The sequence is that of Histidine--tRNA ligase (hisS) from Thermobifida fusca (strain YX).